Consider the following 341-residue polypeptide: Thromboxane A2 receptor (341 aa).

Residues 1-29 are Extracellular-facing; that stretch reads MWPNGTSLGACFRPVNITLQERRAIASPW. N-linked (GlcNAc...) asparagine glycans are attached at residues Asn4 and Asn16. Residues 30 to 52 form a helical membrane-spanning segment; the sequence is FAASFCALGLGSNLLALSVLAGA. The Cytoplasmic segment spans residues 53 to 65; sequence RPGAGPRSSFLAL. The chain crosses the membrane as a helical span at residues 66 to 86; sequence LCGLVLTDFLGLLVTGAIVAS. At 87-105 the chain is on the extracellular side; it reads QHAALLDWRATDPSCRLCY. Cysteines 104 and 181 form a disulfide. The helical transmembrane segment at 106 to 127 threads the bilayer; that stretch reads FMGVAMVFFGLCPLLLGAAMAS. The Cytoplasmic portion of the chain corresponds to 128-147; it reads ERFVGITRPFSRPTATSRRA. A helical transmembrane segment spans residues 148–170; it reads WATVGLVWVAAGALGLLPLLGLG. At 171 to 191 the chain is on the extracellular side; the sequence is RYSVQYPGSWCFLTLGTQRGD. A helical membrane pass occupies residues 192 to 217; sequence VVFGLIFALLGSASVGLSLLLNTVSV. Residues 218 to 244 are Cytoplasmic-facing; the sequence is ATLCRVYHTREATQRPRDCEVEMMVQL. A helical membrane pass occupies residues 245–268; sequence VGIMVVATVCWMPLLVFIMQTLLQ. The Extracellular segment spans residues 269–287; the sequence is TPPVMSFSGQLLRATEHQL. The chain crosses the membrane as a helical span at residues 288-309; sequence LIYLRVATWNQILDPWVYILFR. At 310–341 the chain is on the cytoplasmic side; that stretch reads RSVLRRLHPRFSSQLQAVSLRRPPAQAMLSGP. Residue Ser328 is modified to Phosphoserine.

Belongs to the G-protein coupled receptor 1 family. As to quaternary structure, interacts with RPGRIP1L. Interacts with RACK1; the interaction regulates TBXA2R cell surface expression.

It is found in the cell membrane. Receptor for thromboxane A2 (TXA2), a potent stimulator of platelet aggregation. The activity of this receptor is mediated by a G-protein that activates a phosphatidylinositol-calcium second messenger system. In the kidney, the binding of TXA2 to glomerular TP receptors causes intense vasoconstriction. Activates phospholipase C and adenylyl cyclase. The protein is Thromboxane A2 receptor (Tbxa2r) of Mus musculus (Mouse).